Consider the following 341-residue polypeptide: Serine/threonine-protein kinase-like protein At5g23170 (341 aa).

Positions 16–298 (FSPSKLIGKG…FGEITAEIVA (283 aa)) constitute a Protein kinase domain. Residues 22 to 30 (IGKGSHGYV) and Lys-51 contribute to the ATP site. Residues 52–75 (TPSSLSPSSPSSSSSSKSEQTKKL) form a disordered region. Positions 53–69 (PSSLSPSSPSSSSSSKS) are enriched in low complexity. The active-site Proton acceptor is Asp-153. Positions 311–332 (MSVLRRVVKLKRRKKRLRETLT) form a coiled coil.

It belongs to the protein kinase superfamily. Ser/Thr protein kinase family. In terms of tissue distribution, ubiquitous. Higher expression in mature stamina and pollen.

It carries out the reaction L-seryl-[protein] + ATP = O-phospho-L-seryl-[protein] + ADP + H(+). The enzyme catalyses L-threonyl-[protein] + ATP = O-phospho-L-threonyl-[protein] + ADP + H(+). This is Serine/threonine-protein kinase-like protein At5g23170 from Arabidopsis thaliana (Mouse-ear cress).